A 31-amino-acid polypeptide reads, in one-letter code: Cyclotide cter-E (31 aa).

Positions 1–31 (GIPCAESCVWIPCTVTALLGCSCKDKVCYLD) form a cross-link, cyclopeptide (Gly-Asp). 3 disulfide bridges follow: Cys4–Cys21, Cys8–Cys23, and Cys13–Cys28.

Post-translationally, contains 3 disulfide bonds. This is a cyclic peptide.

In terms of biological role, probably participates in a plant defense mechanism. The sequence is that of Cyclotide cter-E from Clitoria ternatea (Butterfly pea).